The following is a 138-amino-acid chain: Small ribosomal subunit protein uS11c (138 aa).

Residues 1–22 (MAKPILRIGSRKNTRSGSRKNV) are disordered. A compositionally biased stretch (basic residues) spans 9–22 (GSRKNTRSGSRKNV).

This sequence belongs to the universal ribosomal protein uS11 family. In terms of assembly, part of the 30S ribosomal subunit.

It localises to the plastid. It is found in the chloroplast. The protein is Small ribosomal subunit protein uS11c of Arabis hirsuta (Hairy rock-cress).